Reading from the N-terminus, the 379-residue chain is Class V chitinase CHIT5b (379 aa).

An N-terminal signal peptide occupies residues 1–26 (MANILNLKHLLTLALILLALATKSST). The GH18 domain maps to 34–379 (RVKGIYWLEN…TQASKAWKLV (346 aa)). N-linked (GlcNAc...) asparagine glycosylation is found at Asn68, Asn109, and Asn128. Glu147 serves as the catalytic Proton donor. N-linked (GlcNAc...) asparagine glycosylation is found at Asn192, Asn227, and Asn241.

Belongs to the glycosyl hydrolase 18 family. Chitinase class V subfamily.

It catalyses the reaction Random endo-hydrolysis of N-acetyl-beta-D-glucosaminide (1-&gt;4)-beta-linkages in chitin and chitodextrins.. It functions in the pathway glycan degradation; chitin degradation. Functionally, possesses chitinase activity in vitro toward glycol chitin, carboxymethyl-chitin, colloidal chitin, and the chitin oligosaccharides (N-acetylglucosamine) (GlcNAc)6 and (GlcNAc)5. Hydrolyzes (GlcNAc)6 into (GlcNAc)4 and (GlcNAc)2, or two (GlcNAc)3 molecules. Has the capacity to reduce hyphal growth of the fungus Trichoderma viride in an agar-plate bioassay. This Medicago truncatula (Barrel medic) protein is Class V chitinase CHIT5b.